A 179-amino-acid polypeptide reads, in one-letter code: Deoxyuridine 5'-triphosphate nucleotidohydrolase (179 aa).

Residues 90–92 (RSG), Asn103, 107–109 (TVD), and Lys117 contribute to the substrate site.

Belongs to the dUTPase family. Mg(2+) is required as a cofactor.

It catalyses the reaction dUTP + H2O = dUMP + diphosphate + H(+). Its pathway is pyrimidine metabolism; dUMP biosynthesis; dUMP from dCTP (dUTP route): step 2/2. Functionally, this enzyme is involved in nucleotide metabolism: it produces dUMP, the immediate precursor of thymidine nucleotides and it decreases the intracellular concentration of dUTP so that uracil cannot be incorporated into DNA. This is Deoxyuridine 5'-triphosphate nucleotidohydrolase from Thermobifida fusca (strain YX).